Here is a 668-residue protein sequence, read N- to C-terminus: Golgin subfamily A member 6-like protein 1 (668 aa).

Disordered stretches follow at residues 1–120 (MLMW…HQEA), 323–356 (IREQEEKIREQEEKMRRQEEMMWEKEEKMRRQEE), 384–466 (EKMH…EMWR), 481–591 (KEKM…REQE), and 603–639 (EQEEMMQEQEEKMWEQEEKMCEQEEKMQEQEEKMRRQ). Over residues 15–41 (LPTHPHLPTHPHLPTHPHLPTHPHLPT) the composition is skewed to basic residues. Residues 51–72 (MSKETRQSKLAEAKEQLTDHHP) are compositionally biased toward basic and acidic residues. Polar residues-rich tracts occupy residues 73-83 (QTNPSVGTAAS) and 91-103 (NNGTNPETTTSGG). The span at 106 to 120 (SPEDEQKASHQHQEA) shows a compositional bias: basic and acidic residues. Residues 177–663 (LEQALSAVAT…EEKMQEHQEH (487 aa)) are a coiled coil.

Belongs to the GOLGA6 family.

The polypeptide is Golgin subfamily A member 6-like protein 1 (GOLGA6L1) (Homo sapiens (Human)).